A 218-amino-acid chain; its full sequence is Elongation factor Ts (218 aa).

The involved in Mg(2+) ion dislocation from EF-Tu stretch occupies residues 82–85 (TDFV).

It belongs to the EF-Ts family.

It is found in the cytoplasm. In terms of biological role, associates with the EF-Tu.GDP complex and induces the exchange of GDP to GTP. It remains bound to the aminoacyl-tRNA.EF-Tu.GTP complex up to the GTP hydrolysis stage on the ribosome. This chain is Elongation factor Ts (tsf), found in Synechocystis sp. (strain ATCC 27184 / PCC 6803 / Kazusa).